The following is a 263-amino-acid chain: MLLAWVQAFLVSNMLLAEAYGSGGCFWDNGHLYREDQTSPAPGLRCLNWLDAQSGLASAPVSGAGNHSYCRNPDEDPRGPWCYVSGEAGVPEKRPCENLSCPETTSQALPASTTEIEEASEGPGADEVQVFAPANALPARSEAAAVQPVIGISQRVRMNSKEKKDLGTLGYVLGITMMVIIVAIGAGIILGYSYKRGKDLKEQHDQKVCEREMQRITLPLSAFTNPTCEIVDEKTVVVHTSQTPVDPQEGSTPLMGQAGTPGA.

Positions 1-21 (MLLAWVQAFLVSNMLLAEAYG) are cleaved as a signal peptide. Over 22 to 168 (SGGCFWDNGH…NSKEKKDLGT (147 aa)) the chain is Extracellular. In terms of domain architecture, Kringle spans 24 to 101 (GCFWDNGHLY…EKRPCENLSC (78 aa)). 3 disulfides stabilise this stretch: cysteine 25–cysteine 101, cysteine 46–cysteine 82, and cysteine 70–cysteine 96. A glycan (N-linked (GlcNAc...) asparagine) is linked at asparagine 98. The helical transmembrane segment at 169 to 189 (LGYVLGITMMVIIVAIGAGII) threads the bilayer. Topologically, residues 190-263 (LGYSYKRGKD…LMGQAGTPGA (74 aa)) are cytoplasmic. The span at 242–251 (QTPVDPQEGS) shows a compositional bias: polar residues. The interval 242 to 263 (QTPVDPQEGSTPLMGQAGTPGA) is disordered.

It is found in the cell membrane. Negative regulator of hepatic phosphatidylinositol 3-kinase (PI3K) activity. The sequence is that of Phosphoinositide-3-kinase-interacting protein 1 (PIK3IP1) from Pongo abelii (Sumatran orangutan).